The chain runs to 384 residues: DNA dC-&gt;dU-editing enzyme APOBEC-3G (384 aa).

The segment at 1–60 (MTPQFRNTVERMYRDTFSYNFNNRPILSRRNTVWLCYEVKTKDPSRPPLDAKIFRGQVYS) is essential for cytoplasmic localization. CMP/dCMP-type deaminase domains are found at residues 29-138 (RRNT…LRSL) and 214-328 (GRHE…LRTL). Residue T32 is modified to Phosphothreonine; by PKA. Residues H65, C97, and C100 each contribute to the Zn(2+) site. Positions 209–336 (EHWVRGRHET…TLAEAGAKIS (128 aa)) are necessary for homooligomerization. The segment at 213-215 (RGR) is interaction with DNA. Phosphothreonine; by PKA and CAMK2 is present on T218. Position 257 (H257) interacts with Zn(2+). Catalysis depends on E259, which acts as the Proton donor. Zn(2+) is bound by residues C288 and C291. The segment at 313 to 320 (RIYDDQGR) is interaction with DNA.

Belongs to the cytidine and deoxycytidylate deaminase family. Homodimer. Homooligomer. Can bind RNA to form ribonucleoprotein complexes of high-molecular-mass (HMM) or low-molecular-mass (LMM). HMM is inactive and heterogeneous in protein composition because of binding nonselectively to cellular RNAs, which in turn are associated with variety of cellular proteins. The LMM form which is enzymatically active has few or no RNAs associated. Its ability to form homooligomer is distinct from its ability to assemble into HMM. Interacts with APOBEC3B, APOBEC3F, MOV10, AGO2, EIF4E, EIF4ENIF1, DCP2 and DDX6 in an RNA-dependent manner. Interacts with AGO1, AGO3 and PKA/PRKACA. Zn(2+) serves as cofactor.

Its subcellular location is the cytoplasm. The protein resides in the nucleus. It is found in the P-body. It catalyses the reaction a 2'-deoxycytidine in single-stranded DNA + H2O + H(+) = a 2'-deoxyuridine in single-stranded DNA + NH4(+). Its function is as follows. DNA deaminase (cytidine deaminase) which acts as an inhibitor of retrovirus replication and retrotransposon mobility. After the penetration of retroviral nucleocapsids into target cells of infection and the initiation of reverse transcription, it can induce the conversion of cytosine to uracil in the minus-sense single-strand viral DNA, leading to G-to-A hypermutations in the subsequent plus-strand viral DNA. The resultant detrimental levels of mutations in the proviral genome, along with a deamination-independent mechanism that works prior to the proviral integration, together exert efficient antiretroviral effects in infected target cells. Selectively targets single-stranded DNA and does not deaminate double-stranded DNA or single- or double-stranded RNA. This chain is DNA dC-&gt;dU-editing enzyme APOBEC-3G (APOBEC3G), found in Gorilla gorilla gorilla (Western lowland gorilla).